Consider the following 185-residue polypeptide: UPF0301 protein PSHAa2600 (185 aa).

This sequence belongs to the UPF0301 (AlgH) family.

In Pseudoalteromonas translucida (strain TAC 125), this protein is UPF0301 protein PSHAa2600.